The primary structure comprises 209 residues: Protein GrpE (209 aa).

The interval 1–63 (MKKSRKKENM…NPEEACREEN (63 aa)) is disordered. 2 stretches are compositionally biased toward basic and acidic residues: residues 7-42 (KENMDSKERNQKEAERSEARNSESPAEKAGETKVSP) and 50-63 (EAEKNPEEACREEN).

Belongs to the GrpE family. As to quaternary structure, homodimer.

Its subcellular location is the cytoplasm. Its function is as follows. Participates actively in the response to hyperosmotic and heat shock by preventing the aggregation of stress-denatured proteins, in association with DnaK and GrpE. It is the nucleotide exchange factor for DnaK and may function as a thermosensor. Unfolded proteins bind initially to DnaJ; upon interaction with the DnaJ-bound protein, DnaK hydrolyzes its bound ATP, resulting in the formation of a stable complex. GrpE releases ADP from DnaK; ATP binding to DnaK triggers the release of the substrate protein, thus completing the reaction cycle. Several rounds of ATP-dependent interactions between DnaJ, DnaK and GrpE are required for fully efficient folding. This is Protein GrpE from Methanosarcina mazei (strain ATCC BAA-159 / DSM 3647 / Goe1 / Go1 / JCM 11833 / OCM 88) (Methanosarcina frisia).